A 1324-amino-acid polypeptide reads, in one-letter code: Coiled-coil domain-containing protein 171 (1324 aa).

Coiled coils occupy residues 29-296, 325-393, 453-521, 599-712, and 981-1145; these read KNET…RAAH, AEAV…RLQY, FSVV…KCAD, SELC…VREN, and FTQR…KECV. Polar residues predominate over residues 1301-1312; it reads PHSLSSQSSPGV. Positions 1301–1324 are disordered; sequence PHSLSSQSSPGVPTNAKRPSQIGL.

This Mus musculus (Mouse) protein is Coiled-coil domain-containing protein 171 (Ccdc171).